Here is a 460-residue protein sequence, read N- to C-terminus: tRNA modification GTPase MnmE (460 aa).

Residues Arg29, Glu86, and Lys126 each contribute to the (6S)-5-formyl-5,6,7,8-tetrahydrofolate site. The TrmE-type G domain maps to 222-383; sequence GMRVVIAGRP…LAEHLKECMG (162 aa). Position 232 (Asn232) interacts with K(+). GTP contacts are provided by residues 232-237, 251-257, 276-279, and 341-344; these read NAGKSS, TAIAGTT, DTAG, and NKAD. Ser236 is a Mg(2+) binding site. K(+)-binding residues include Thr251, Ile253, and Thr256. Position 257 (Thr257) interacts with Mg(2+). (6S)-5-formyl-5,6,7,8-tetrahydrofolate is bound at residue Lys460.

It belongs to the TRAFAC class TrmE-Era-EngA-EngB-Septin-like GTPase superfamily. TrmE GTPase family. Homodimer. Heterotetramer of two MnmE and two MnmG subunits. It depends on K(+) as a cofactor.

It is found in the cytoplasm. Functionally, exhibits a very high intrinsic GTPase hydrolysis rate. Involved in the addition of a carboxymethylaminomethyl (cmnm) group at the wobble position (U34) of certain tRNAs, forming tRNA-cmnm(5)s(2)U34. The protein is tRNA modification GTPase MnmE of Pseudoalteromonas atlantica (strain T6c / ATCC BAA-1087).